The primary structure comprises 579 residues: Membrane frizzled-related protein (579 aa).

Over 1–69 (MKDFSDVILC…RPDCRFSWLC (69 aa)) the chain is Cytoplasmic. A helical; Signal-anchor for type II membrane protein transmembrane segment spans residues 70–90 (VLLLSSLLLLLLGLLVAIILA). At 91–579 (QLQAAPPSGA…AADLEACAQP (489 aa)) the chain is on the extracellular side. Positions 100-143 (ASHSPLPAGGLTTTTTTPTITTSQAAGTPKGQQESGVSPSPQST) are disordered. Positions 111 to 121 (TTTTTTPTITT) are enriched in low complexity. Residues 122–143 (SQAAGTPKGQQESGVSPSPQST) are compositionally biased toward polar residues. Disulfide bonds link C144–C170 and C197–C216. The CUB 1 domain occupies 144–253 (CGGLLSGPRG…FGFHAWYQAM (110 aa)). N-linked (GlcNAc...) asparagine glycosylation is present at N227. The region spanning 259 to 295 (SCAHDEFRCDQLICLLPDSVCDGFANCADGSDETNCS) is the LDL-receptor class A 1 domain. 5 disulfides stabilise this stretch: C260–C272, C267–C285, C279–C294, C301–C327, and C354–C377. Residues 301 to 414 (CGGNLTGLQG…GGFSATYLAF (114 aa)) enclose the CUB 2 domain. N415 carries an N-linked (GlcNAc...) asparagine glycan. The LDL-receptor class A 2 domain occupies 420–455 (PCGPSELSCQAGGCKGVQWMCDMWRDCTDGSDDNCS). Cystine bridges form between C421–C433, C428–C446, C440–C454, C466–C528, C474–C521, C512–C549, C538–C576, and C542–C564. The 119-residue stretch at 461 to 579 (PPELACEPVQ…AADLEACAQP (119 aa)) folds into the FZ domain.

As to quaternary structure, interacts with C1QTNF5. As to expression, specifically expressed in brain. Strongly expressed in medulla oblongata and to a lower extent in hippocampus and corpus callosum. Expressed in keratinocytes.

The protein localises to the apical cell membrane. Functionally, may play a role in eye development. The polypeptide is Membrane frizzled-related protein (MFRP) (Homo sapiens (Human)).